Reading from the N-terminus, the 424-residue chain is Histidine--tRNA ligase (424 aa).

Belongs to the class-II aminoacyl-tRNA synthetase family. As to quaternary structure, homodimer.

It localises to the cytoplasm. It carries out the reaction tRNA(His) + L-histidine + ATP = L-histidyl-tRNA(His) + AMP + diphosphate + H(+). This is Histidine--tRNA ligase from Sodalis glossinidius (strain morsitans).